The chain runs to 67 residues: Large ribosomal subunit protein uL29 (67 aa).

It belongs to the universal ribosomal protein uL29 family.

This is Large ribosomal subunit protein uL29 from Methanothrix thermoacetophila (strain DSM 6194 / JCM 14653 / NBRC 101360 / PT) (Methanosaeta thermophila).